The sequence spans 76 residues: Mu-scoloptoxin(15)-Ssm1a (76 aa).

The first 23 residues, 1–23 (MEKKIIFLVFLVALLALPGFIST), serve as a signal peptide directing secretion. The important for inhibition of KCNQ4 stretch occupies residues 33–36 (KKRK). 2 disulfide bridges follow: Cys-43/Cys-69 and Cys-47/Cys-71.

The protein belongs to the scoloptoxin-15 family. Expressed by the venom gland.

The protein resides in the secreted. In terms of biological role, blocks voltage-gated potassium channels Kv7.4/KCNQ4 (IC(50)=2.5 uM), Kv7.1/KCNQ1 (IC(50)=2.8 uM), Kv7.2/KCNQ2 (IC(50)=2.7 uM) and Kv7.5/KCNQ5 (IC(50)=2.7 uM). Targets the pore domain, in particular negatively charged residues 'Asp-266' and 'Asp-288', of KCNQ4 and probably other KCNQ channel family members where these residues are conserved. In vivo, shows vasoconstrictive activity resulting in acute hypertension when injected intravenously in mice. Also induces coronary vasospasms ultimately leading to heart failure. Induces seizures when injected into the hippocampus of mice. Decreases respiratory rate while increasing respiratory amplitude, probably by triggering a contraction of the bronchial ring. This chain is Mu-scoloptoxin(15)-Ssm1a, found in Scolopendra mutilans (Chinese red-headed centipede).